Consider the following 205-residue polypeptide: Small ribosomal subunit protein uS4 (205 aa).

Residues 14–49 (RMGENIWGRPKSPVNRREYGPGQHGQRRKGKMSDFG) are disordered. In terms of domain architecture, S4 RNA-binding spans 94 to 157 (SRLDAIVYRA…KQLVTVLEAV (64 aa)).

It belongs to the universal ribosomal protein uS4 family. As to quaternary structure, part of the 30S ribosomal subunit. Contacts protein S5. The interaction surface between S4 and S5 is involved in control of translational fidelity.

In terms of biological role, one of the primary rRNA binding proteins, it binds directly to 16S rRNA where it nucleates assembly of the body of the 30S subunit. Functionally, with S5 and S12 plays an important role in translational accuracy. The polypeptide is Small ribosomal subunit protein uS4 (Agrobacterium fabrum (strain C58 / ATCC 33970) (Agrobacterium tumefaciens (strain C58))).